Reading from the N-terminus, the 65-residue chain is Small ribosomal subunit protein bS21 (65 aa).

The interval 44–65 is disordered; the sequence is DDRLKRSRGKRRAQRANEERNS. The span at 48–57 shows a compositional bias: basic residues; that stretch reads KRSRGKRRAQ.

This sequence belongs to the bacterial ribosomal protein bS21 family.

In Prosthecochloris aestuarii (strain DSM 271 / SK 413), this protein is Small ribosomal subunit protein bS21.